The primary structure comprises 642 residues: MSTGAQSKAAVAGQHADGPRLLADVGGTNARFALETGPGDITQIRVYPGADYPTLTDAIRKYLKDVKITRVNHAAIAIANPVDGDQVTMTNHDWSFSIEATRRALGFDTLLVVNDFTALAMALPGLTDAQRVQIGGGARRQNSVIGLLGPGTGLGVSGLIPADDRWIALGSEGGHASFAPQDEREDLVLQYARKKFPHVSFERVCAGPGMEIIYRALAARDKKRVAATVDTVEIVERAHAGDALALETVECFCGILGAFAGSVALTLGALGGVYIGGGVALKLGELFTRSSFRARFEAKGRFTHYLENIPTYLITAEYPAFLGVSAILAEQLSNRSGGASSAVFERIRQMRDALTPAERRVADLALNHPRSIINDPIVDIARKADVSQPTVIRFCRSLGCQGLSDFKLKLATGLTGTIPMSHSQVHLGDTATDFGAKVLDNTVSAILQLREHLNFEHVENAIEILNGARRIEFYGLGNSNIVAQDAHYKFFRFGIPTIAYGDLYMQAASAALLGKGDVIVAVSKSGRAPELLRVLDVAMQAGAKVIAITSSNTPLAKRATVALETDHIEMRESQLSMISRILHLLMIDILAVGVAIRRASTNGELPEAVAQAKARASDDETADVLDWLSHGASPAAKDVARD.

Residues 1–340 (MSTGAQSKAA…QLSNRSGGAS (340 aa)) are glucokinase. Position 23-28 (23-28 (ADVGGT)) interacts with ATP. The region spanning 341-417 (SAVFERIRQM…LKLATGLTGT (77 aa)) is the HTH rpiR-type domain. The tract at residues 341–642 (SAVFERIRQM…SPAAKDVARD (302 aa)) is putative HTH-type transcriptional regulator. The H-T-H motif DNA-binding region spans 377–396 (IVDIARKADVSQPTVIRFCR). An SIS domain is found at 461-600 (AIEILNGARR…AVGVAIRRAS (140 aa)). The chain crosses the membrane as a helical span at residues 576-596 (SMISRILHLLMIDILAVGVAI).

It in the N-terminal section; belongs to the bacterial glucokinase family.

It is found in the membrane. The catalysed reaction is D-glucose + ATP = D-glucose 6-phosphate + ADP + H(+). The chain is Bifunctional protein glk (glk) from Burkholderia lata (strain ATCC 17760 / DSM 23089 / LMG 22485 / NCIMB 9086 / R18194 / 383).